The sequence spans 412 residues: Phytoene synthase, chloroplastic (412 aa).

This sequence belongs to the phytoene/squalene synthase family. In terms of assembly, monomer. As to expression, expressed in roots, leaves, flower buds, sepals, petals, lips and lip crests.

It localises to the plastid. The protein localises to the chloroplast. It carries out the reaction 2 (2E,6E,10E)-geranylgeranyl diphosphate = 15-cis-phytoene + 2 diphosphate. It participates in carotenoid biosynthesis; phytoene biosynthesis; all-trans-phytoene from geranylgeranyl diphosphate: step 1/1. Its function is as follows. Catalyzes the reaction from prephytoene diphosphate to phytoene. The protein is Phytoene synthase, chloroplastic (PSY) of Oncidium hybrid cultivar (Orchid).